The following is a 182-amino-acid chain: Adenylate kinase (182 aa).

Residue 12–17 (GAGKGT) coordinates ATP. The interval 32 to 61 (STGDLLRDEVSSGSVLGIKAAEIMNKGELV) is NMP. Residues Thr-33, Arg-38, 59-61 (ELV), 85-88 (GFPR), and Gln-92 each bind AMP. An LID region spans residues 126–132 (ERGRQDD). Position 127 (Arg-127) interacts with ATP. Residues Arg-129 and Arg-140 each coordinate AMP. ATP is bound at residue Ala-168.

This sequence belongs to the adenylate kinase family. In terms of assembly, monomer.

Its subcellular location is the cytoplasm. The enzyme catalyses AMP + ATP = 2 ADP. It participates in purine metabolism; AMP biosynthesis via salvage pathway; AMP from ADP: step 1/1. Functionally, catalyzes the reversible transfer of the terminal phosphate group between ATP and AMP. Plays an important role in cellular energy homeostasis and in adenine nucleotide metabolism. In Prochlorococcus marinus (strain NATL1A), this protein is Adenylate kinase.